Consider the following 368-residue polypeptide: Dihydroorotate dehydrogenase (quinone) (368 aa).

FMN is bound by residues 67–71 and threonine 91; that span reads AGFDK. Lysine 71 lines the substrate pocket. 116 to 120 lines the substrate pocket; the sequence is NRMGF. FMN-binding residues include asparagine 146 and asparagine 179. Asparagine 179 provides a ligand contact to substrate. The active-site Nucleophile is the serine 182. Asparagine 184 serves as a coordination point for substrate. Positions 222 and 250 each coordinate FMN. 251–252 lines the substrate pocket; it reads NT. FMN contacts are provided by residues glycine 276, glycine 305, and 326 to 327; that span reads YS.

The protein belongs to the dihydroorotate dehydrogenase family. Type 2 subfamily. As to quaternary structure, monomer. It depends on FMN as a cofactor.

Its subcellular location is the cell membrane. It catalyses the reaction (S)-dihydroorotate + a quinone = orotate + a quinol. It functions in the pathway pyrimidine metabolism; UMP biosynthesis via de novo pathway; orotate from (S)-dihydroorotate (quinone route): step 1/1. Functionally, catalyzes the conversion of dihydroorotate to orotate with quinone as electron acceptor. This is Dihydroorotate dehydrogenase (quinone) from Streptomyces coelicolor (strain ATCC BAA-471 / A3(2) / M145).